A 428-amino-acid polypeptide reads, in one-letter code: Adenylosuccinate synthetase (428 aa).

GTP is bound by residues 12 to 18 (GDEGKGK) and 40 to 42 (GHT). Asp-13 acts as the Proton acceptor in catalysis. Residues Asp-13 and Gly-40 each contribute to the Mg(2+) site. IMP contacts are provided by residues 13-16 (DEGK), 38-41 (NAGH), Thr-130, Arg-144, Gln-225, Thr-240, and Arg-304. His-41 acts as the Proton donor in catalysis. Residue 300–306 (ATTGRPR) participates in substrate binding. GTP-binding positions include Arg-306, 332–334 (KLD), and 415–417 (SVG).

It belongs to the adenylosuccinate synthetase family. In terms of assembly, homodimer. Requires Mg(2+) as cofactor.

It is found in the cytoplasm. It catalyses the reaction IMP + L-aspartate + GTP = N(6)-(1,2-dicarboxyethyl)-AMP + GDP + phosphate + 2 H(+). Its pathway is purine metabolism; AMP biosynthesis via de novo pathway; AMP from IMP: step 1/2. Its function is as follows. Plays an important role in the de novo pathway of purine nucleotide biosynthesis. Catalyzes the first committed step in the biosynthesis of AMP from IMP. The chain is Adenylosuccinate synthetase from Lawsonia intracellularis (strain PHE/MN1-00).